A 60-amino-acid polypeptide reads, in one-letter code: Short neurotoxin 1 (60 aa).

4 cysteine pairs are disulfide-bonded: Cys3–Cys22, Cys17–Cys39, Cys41–Cys52, and Cys53–Cys58.

Belongs to the three-finger toxin family. Short-chain subfamily. Type I alpha-neurotoxin sub-subfamily. As to expression, expressed by the venom gland.

The protein resides in the secreted. Its function is as follows. Binds to muscle nicotinic acetylcholine receptor (nAChR) and inhibit acetylcholine from binding to the receptor, thereby impairing neuromuscular transmission. In Hydrophis schistosus (Beaked sea snake), this protein is Short neurotoxin 1.